Reading from the N-terminus, the 298-residue chain is ATP synthase gamma chain (298 aa).

It belongs to the ATPase gamma chain family. F-type ATPases have 2 components, CF(1) - the catalytic core - and CF(0) - the membrane proton channel. CF(1) has five subunits: alpha(3), beta(3), gamma(1), delta(1), epsilon(1). CF(0) has three main subunits: a, b and c.

It is found in the cell membrane. Functionally, produces ATP from ADP in the presence of a proton gradient across the membrane. The gamma chain is believed to be important in regulating ATPase activity and the flow of protons through the CF(0) complex. In Frankia casuarinae (strain DSM 45818 / CECT 9043 / HFP020203 / CcI3), this protein is ATP synthase gamma chain.